The chain runs to 261 residues: SLA class II histocompatibility antigen, DQ haplotype C beta chain (261 aa).

Residues 1–31 form the signal peptide; that stretch reads MSGMVALRLPRGLWTAALTVMLVVLGAPVAE. Residues 32–126 form a beta-1 region; sequence GRDSPQDFVF…IEEGTTLQRR (95 aa). At 32 to 230 the chain is on the extracellular side; it reads GRDSPQDFVF…RAQSESAQSK (199 aa). 2 disulfides stabilise this stretch: Cys-47–Cys-111 and Cys-149–Cys-205. Asn-51 carries an N-linked (GlcNAc...) asparagine glycan. The beta-2 stretch occupies residues 127–220; sequence VQPTVTISPS…SLQNPILVEW (94 aa). The Ig-like C1-type domain occupies 129 to 233; the sequence is PTVTISPSKA…SESAQSKMLS (105 aa). The segment at 221–230 is connecting peptide; it reads RAQSESAQSK. Residues 231–251 traverse the membrane as a helical segment; sequence MLSGVGGFVLGLIFLGLGLFI. The Cytoplasmic segment spans residues 252–261; that stretch reads RHRSQKGLVR.

It belongs to the MHC class II family.

It is found in the membrane. The protein is SLA class II histocompatibility antigen, DQ haplotype C beta chain of Sus scrofa (Pig).